Consider the following 480-residue polypeptide: MAQFGSVCLPEAFLDVMREAMPAGLAMDDFIAACQRPLRRSIRVNTLKISVDAFLAQVAPYGWQLTPVPWCPEGFWIERDDEDALPLGSTAEHLSGQFYIQEASSMLPVAALFADGNTPARVMDVAAAPGSKTTQIAALMQNQGFILANEYSASRVKVLHANISRCGIHNVGLTHFDGRVFGAALPEQFDAILLDAPCSGEGVVRKDPDALRNWSPQSDQEIAATQRELIDSAFHALAPGGTLVYSTCTLNREENQETVRWLLARYPQAVEVLSLEALFPGADAALTEEGFLHVFPQIYDCEGFFVARLRKTASVEPLPAPTYKVGAFPFTPLKTREAQAVIAAARKVGLEWDETLELWQRDKEIWLFPQAFTPFIGKVRFSRTGIRLAEIHNKGYRWQHEAVVALAGSDNPLGFELSAEEAQEWYRGRDVWPQTVPDADDVIVTFQHQPLGLAKKVGSRLKNSYPRELVRDGVLFSAPV.

S-adenosyl-L-methionine-binding positions include 126–132 (AAAPGSK), E150, D177, and D195. C248 (nucleophile) is an active-site residue.

It belongs to the class I-like SAM-binding methyltransferase superfamily. RsmB/NOP family.

It localises to the cytoplasm. It carries out the reaction cytidine(1407) in 16S rRNA + S-adenosyl-L-methionine = 5-methylcytidine(1407) in 16S rRNA + S-adenosyl-L-homocysteine + H(+). Specifically methylates the cytosine at position 1407 (m5C1407) of 16S rRNA. The chain is Ribosomal RNA small subunit methyltransferase F from Cronobacter sakazakii (strain ATCC BAA-894) (Enterobacter sakazakii).